The primary structure comprises 1513 residues: DNA-directed RNA polymerase subunit beta'' (1513 aa).

Residues Cys-220, Cys-296, Cys-303, and Cys-306 each coordinate Zn(2+). The tract at residues 644–769 is disordered; the sequence is RTREKDSENE…EYGNPEEDSV (126 aa). Residues 659-679 are compositionally biased toward basic and acidic residues; sequence NEYRTREEECKTLEDEYRTRE. The span at 680–707 shows a compositional bias: acidic residues; sequence EEYETLEDEYGIPENEYETLEDEYGILE. Residues 726–737 show a composition bias toward basic and acidic residues; sequence NKYRPREDKYGT. Over residues 738–767 the composition is skewed to acidic residues; the sequence is LEEDSEDEHGTLEEDSEEDSEDEYGNPEED.

This sequence belongs to the RNA polymerase beta' chain family. RpoC2 subfamily. In plastids the minimal PEP RNA polymerase catalytic core is composed of four subunits: alpha, beta, beta', and beta''. When a (nuclear-encoded) sigma factor is associated with the core the holoenzyme is formed, which can initiate transcription. It depends on Zn(2+) as a cofactor.

The protein localises to the plastid. Its subcellular location is the chloroplast. It catalyses the reaction RNA(n) + a ribonucleoside 5'-triphosphate = RNA(n+1) + diphosphate. Functionally, DNA-dependent RNA polymerase catalyzes the transcription of DNA into RNA using the four ribonucleoside triphosphates as substrates. In Oryza nivara (Indian wild rice), this protein is DNA-directed RNA polymerase subunit beta''.